Reading from the N-terminus, the 203-residue chain is Small ribosomal subunit protein uS4 (203 aa).

In terms of domain architecture, S4 RNA-binding spans 93-156 (RRLDNVVYRL…LKVPAILEAV (64 aa)).

This sequence belongs to the universal ribosomal protein uS4 family. In terms of assembly, part of the 30S ribosomal subunit. Contacts protein S5. The interaction surface between S4 and S5 is involved in control of translational fidelity.

Its function is as follows. One of the primary rRNA binding proteins, it binds directly to 16S rRNA where it nucleates assembly of the body of the 30S subunit. In terms of biological role, with S5 and S12 plays an important role in translational accuracy. The chain is Small ribosomal subunit protein uS4 from Streptococcus sanguinis (strain SK36).